The chain runs to 505 residues: Putative diacyglycerol O-acyltransferase MT0919 (505 aa).

The active-site Proton acceptor is the histidine 167.

This sequence belongs to the long-chain O-acyltransferase family.

The catalysed reaction is an acyl-CoA + a 1,2-diacyl-sn-glycerol = a triacyl-sn-glycerol + CoA. Its pathway is glycerolipid metabolism; triacylglycerol biosynthesis. The protein is Putative diacyglycerol O-acyltransferase MT0919 of Mycobacterium tuberculosis (strain CDC 1551 / Oshkosh).